A 616-amino-acid polypeptide reads, in one-letter code: Chaperone protein HtpG (616 aa).

Residues 1–333 are a; substrate-binding; sequence MKKQFDTEVN…CQDLPLNVSR (333 aa). The interval 334-542 is b; that stretch reads EILQQNKILS…SNDPTYQMQK (209 aa). A c region spans residues 543 to 616; that stretch reads IMLSMGQEVK…INEFLEKDLL (74 aa).

It belongs to the heat shock protein 90 family. Homodimer.

It is found in the cytoplasm. Functionally, molecular chaperone. Has ATPase activity. The sequence is that of Chaperone protein HtpG from Borreliella afzelii (strain PKo) (Borrelia afzelii).